A 103-amino-acid polypeptide reads, in one-letter code: Large ribosomal subunit protein bL21 (103 aa).

It belongs to the bacterial ribosomal protein bL21 family. Part of the 50S ribosomal subunit. Contacts protein L20.

In terms of biological role, this protein binds to 23S rRNA in the presence of protein L20. This Nocardia farcinica (strain IFM 10152) protein is Large ribosomal subunit protein bL21.